Consider the following 353-residue polypeptide: Photosystem II protein D1 (353 aa).

Residue Thr2 is modified to N-acetylthreonine. A Phosphothreonine modification is found at Thr2. 3 helical membrane passes run 29–46 (YIGW…TATS), 118–133 (HFLL…EWEL), and 142–156 (WIAV…AATA). His118 lines the chlorophyll a pocket. Pheophytin a is bound at residue Tyr126. Positions 170 and 189 each coordinate [CaMn4O5] cluster. Residues 197–218 (FHMLGVAGVFGGSLFSAMHGSL) form a helical membrane-spanning segment. His198 is a chlorophyll a binding site. Residues His215 and 264–265 (SF) contribute to the a quinone site. His215 lines the Fe cation pocket. His272 contacts Fe cation. A helical membrane pass occupies residues 274 to 288 (FLAAWPVVGIWFTAL). Positions 332, 333, 342, and 344 each coordinate [CaMn4O5] cluster. A propeptide spanning residues 345–353 (AVEAPAVNG) is cleaved from the precursor.

Belongs to the reaction center PufL/M/PsbA/D family. In terms of assembly, PSII is composed of 1 copy each of membrane proteins PsbA, PsbB, PsbC, PsbD, PsbE, PsbF, PsbH, PsbI, PsbJ, PsbK, PsbL, PsbM, PsbT, PsbX, PsbY, PsbZ, Psb30/Ycf12, at least 3 peripheral proteins of the oxygen-evolving complex and a large number of cofactors. It forms dimeric complexes. Requires The D1/D2 heterodimer binds P680, chlorophylls that are the primary electron donor of PSII, and subsequent electron acceptors. It shares a non-heme iron and each subunit binds pheophytin, quinone, additional chlorophylls, carotenoids and lipids. D1 provides most of the ligands for the Mn4-Ca-O5 cluster of the oxygen-evolving complex (OEC). There is also a Cl(-1) ion associated with D1 and D2, which is required for oxygen evolution. The PSII complex binds additional chlorophylls, carotenoids and specific lipids. as cofactor. In terms of processing, tyr-161 forms a radical intermediate that is referred to as redox-active TyrZ, YZ or Y-Z. C-terminally processed by CTPA; processing is essential to allow assembly of the oxygen-evolving complex and thus photosynthetic growth.

The protein resides in the plastid. Its subcellular location is the chloroplast thylakoid membrane. It carries out the reaction 2 a plastoquinone + 4 hnu + 2 H2O = 2 a plastoquinol + O2. Its function is as follows. Photosystem II (PSII) is a light-driven water:plastoquinone oxidoreductase that uses light energy to abstract electrons from H(2)O, generating O(2) and a proton gradient subsequently used for ATP formation. It consists of a core antenna complex that captures photons, and an electron transfer chain that converts photonic excitation into a charge separation. The D1/D2 (PsbA/PsbD) reaction center heterodimer binds P680, the primary electron donor of PSII as well as several subsequent electron acceptors. This Marchantia polymorpha (Common liverwort) protein is Photosystem II protein D1.